The sequence spans 418 residues: ATP-dependent Clp protease ATP-binding subunit ClpX (418 aa).

One can recognise a ClpX-type ZB domain in the interval 1-54; it reads MTRKDDESDQFFCSFCGKNQKEVKKLIAGPSVYICNECVSLCEEIIEDEDKESL. Zn(2+) is bound by residues Cys13, Cys16, Cys35, and Cys38. An ATP-binding site is contributed by 120–127; that stretch reads PTGCGKTL.

This sequence belongs to the ClpX chaperone family. Component of the ClpX-ClpP complex. Forms a hexameric ring that, in the presence of ATP, binds to fourteen ClpP subunits assembled into a disk-like structure with a central cavity, resembling the structure of eukaryotic proteasomes.

In terms of biological role, ATP-dependent specificity component of the Clp protease. It directs the protease to specific substrates. Can perform chaperone functions in the absence of ClpP. The sequence is that of ATP-dependent Clp protease ATP-binding subunit ClpX from Desulforapulum autotrophicum (strain ATCC 43914 / DSM 3382 / VKM B-1955 / HRM2) (Desulfobacterium autotrophicum).